The following is a 437-amino-acid chain: GTPase HflX (437 aa).

A disordered region spans residues 150-173; the sequence is DRQGGGSGGGKGGGGAARGEGEKQ. The span at 152–167 shows a compositional bias: gly residues; the sequence is QGGGSGGGKGGGGAAR. The region spanning 212–382 is the Hflx-type G domain; it reads ATAAIVGYTN…ACVEMLESRV (171 aa). GTP-binding positions include 218–225, 243–247, 265–268, 331–334, and 360–362; these read GYTNAGKS, FATLD, DTVG, NKVD, and SVK. Positions 225 and 245 each coordinate Mg(2+).

The protein belongs to the TRAFAC class OBG-HflX-like GTPase superfamily. HflX GTPase family. Monomer. Associates with the 50S ribosomal subunit. It depends on Mg(2+) as a cofactor.

It localises to the cytoplasm. In terms of biological role, GTPase that associates with the 50S ribosomal subunit and may have a role during protein synthesis or ribosome biogenesis. This is GTPase HflX from Akkermansia muciniphila (strain ATCC BAA-835 / DSM 22959 / JCM 33894 / BCRC 81048 / CCUG 64013 / CIP 107961 / Muc).